The following is a 118-amino-acid chain: MQSVTRQTARVLPQMGKQVSYLSTSGAWRATASGGDMVVEIKEPKTRTEKLMAFQKKLRAKTPLGKLDEFSRHPYQEKEPLKPWPNQTNPYTGEIGGPAGPEPTRYGDWERKGRVSDF.

Residues 1 to 30 (MQSVTRQTARVLPQMGKQVSYLSTSGAWRA) constitute a mitochondrion transit peptide. The interval 65–118 (GKLDEFSRHPYQEKEPLKPWPNQTNPYTGEIGGPAGPEPTRYGDWERKGRVSDF) is disordered. Basic and acidic residues-rich tracts occupy residues 66–81 (KLDEFSRHPYQEKEPL) and 105–118 (RYGDWERKGRVSDF).

The protein belongs to the SDHAF4 family. In terms of assembly, interacts with SdhA in its FAD-bound form.

The protein resides in the mitochondrion matrix. Functionally, plays an essential role in the assembly of succinate dehydrogenase (SDH), an enzyme complex (also referred to as respiratory complex II) that is a component of both the tricarboxylic acid (TCA) cycle and the mitochondrial electron transport chain, and which couples the oxidation of succinate to fumarate with the reduction of ubiquinone (coenzyme Q) to ubiquinol. Binds to the flavoprotein subunit SdhA in its FAD-bound form, blocking the generation of excess reactive oxygen species (ROS) and facilitating its assembly with the iron-sulfur protein subunit SdhB into the SDH catalytic dimer. The protein is Succinate dehydrogenase assembly factor 4, mitochondrial of Drosophila melanogaster (Fruit fly).